Consider the following 1163-residue polypeptide: Putative beta-glucuronidase (1163 aa).

The signal sequence occupies residues 1–20 (MPRFLKYILGLFLISISAFG).

The protein belongs to the glycosyl hydrolase 2 family.

It localises to the periplasm. The enzyme catalyses a beta-D-glucuronoside + H2O = D-glucuronate + an alcohol. Functionally, glycoside hydrolase involved in ulvan degradation. Ulvan is the main polysaccharide component of the Ulvales (green seaweed) cell wall. It is composed of disaccharide building blocks comprising 3-sulfated rhamnose (Rha3S) linked to D-glucuronic acid (GlcA), L-iduronic acid (IduA), or D-xylose (Xyl). This is Putative beta-glucuronidase from Formosa agariphila (strain DSM 15362 / KCTC 12365 / LMG 23005 / KMM 3901 / M-2Alg 35-1).